Reading from the N-terminus, the 408-residue chain is Tyrosine--tRNA ligase (408 aa).

The 'HIGH' region signature appears at 50-59 (PTGKDLTLGH). The 'KMSKS' region signature appears at 234–238 (KMSKS). Lysine 237 contacts ATP. Residues 346-407 (MQAARVLFTA…GKRKYGRVVL (62 aa)) enclose the S4 RNA-binding domain.

It belongs to the class-I aminoacyl-tRNA synthetase family. TyrS type 2 subfamily. In terms of assembly, homodimer.

The protein localises to the cytoplasm. It catalyses the reaction tRNA(Tyr) + L-tyrosine + ATP = L-tyrosyl-tRNA(Tyr) + AMP + diphosphate + H(+). Functionally, catalyzes the attachment of tyrosine to tRNA(Tyr) in a two-step reaction: tyrosine is first activated by ATP to form Tyr-AMP and then transferred to the acceptor end of tRNA(Tyr). This is Tyrosine--tRNA ligase from Symbiobacterium thermophilum (strain DSM 24528 / JCM 14929 / IAM 14863 / T).